The primary structure comprises 400 residues: Phosphoglycerate kinase (400 aa).

Substrate-binding positions include 23–25 (DLN), R38, 61–64 (HFGR), R120, and R153. ATP-binding positions include K203, E325, and 355-358 (GGDT).

It belongs to the phosphoglycerate kinase family. In terms of assembly, monomer.

It localises to the cytoplasm. It carries out the reaction (2R)-3-phosphoglycerate + ATP = (2R)-3-phospho-glyceroyl phosphate + ADP. Its pathway is carbohydrate degradation; glycolysis; pyruvate from D-glyceraldehyde 3-phosphate: step 2/5. This is Phosphoglycerate kinase from Methylorubrum extorquens (strain PA1) (Methylobacterium extorquens).